Reading from the N-terminus, the 158-residue chain is Regulator of sigma D (158 aa).

It belongs to the Rsd/AlgQ family. In terms of assembly, interacts with RpoD.

It localises to the cytoplasm. In terms of biological role, binds RpoD and negatively regulates RpoD-mediated transcription activation by preventing the interaction between the primary sigma factor RpoD with the catalytic core of the RNA polymerase and with promoter DNA. May be involved in replacement of the RNA polymerase sigma subunit from RpoD to RpoS during the transition from exponential growth to the stationary phase. In Escherichia fergusonii (strain ATCC 35469 / DSM 13698 / CCUG 18766 / IAM 14443 / JCM 21226 / LMG 7866 / NBRC 102419 / NCTC 12128 / CDC 0568-73), this protein is Regulator of sigma D.